The following is a 231-amino-acid chain: Orotate phosphoribosyltransferase (231 aa).

5-phospho-alpha-D-ribose 1-diphosphate-binding positions include Lys27, 79-80 (YK), Arg106, Lys107, Lys110, His112, and 133-141 (DDVMTAGTA). Thr137 and Arg166 together coordinate orotate.

This sequence belongs to the purine/pyrimidine phosphoribosyltransferase family. PyrE subfamily. Homodimer. Requires Mg(2+) as cofactor.

It catalyses the reaction orotidine 5'-phosphate + diphosphate = orotate + 5-phospho-alpha-D-ribose 1-diphosphate. It participates in pyrimidine metabolism; UMP biosynthesis via de novo pathway; UMP from orotate: step 1/2. In terms of biological role, catalyzes the transfer of a ribosyl phosphate group from 5-phosphoribose 1-diphosphate to orotate, leading to the formation of orotidine monophosphate (OMP). This chain is Orotate phosphoribosyltransferase, found in Bifidobacterium animalis subsp. lactis (strain AD011).